Reading from the N-terminus, the 392-residue chain is Phosphoglycerate kinase (392 aa).

Substrate-binding positions include 21–23 (DFN), Arg-36, 59–62 (HLGR), Arg-113, and Arg-146. ATP is bound by residues Lys-197, Glu-319, and 345 to 348 (GGDT).

This sequence belongs to the phosphoglycerate kinase family. As to quaternary structure, monomer.

The protein resides in the cytoplasm. It catalyses the reaction (2R)-3-phosphoglycerate + ATP = (2R)-3-phospho-glyceroyl phosphate + ADP. Its pathway is carbohydrate degradation; glycolysis; pyruvate from D-glyceraldehyde 3-phosphate: step 2/5. The protein is Phosphoglycerate kinase of Francisella tularensis subsp. tularensis (strain FSC 198).